A 502-amino-acid polypeptide reads, in one-letter code: ATP synthase subunit beta, chloroplastic (502 aa).

A Phosphoserine modification is found at Ser-17. 176-183 (GGAGVGKT) lines the ATP pocket.

It belongs to the ATPase alpha/beta chains family. As to quaternary structure, F-type ATPases have 2 components, CF(1) - the catalytic core - and CF(0) - the membrane proton channel. CF(1) has five subunits: alpha(3), beta(3), gamma(1), delta(1), epsilon(1). CF(0) has four main subunits: a(1), b(1), b'(1) and c(9-12).

The protein localises to the plastid. It is found in the chloroplast thylakoid membrane. It catalyses the reaction ATP + H2O + 4 H(+)(in) = ADP + phosphate + 5 H(+)(out). Its function is as follows. Produces ATP from ADP in the presence of a proton gradient across the membrane. The catalytic sites are hosted primarily by the beta subunits. The protein is ATP synthase subunit beta, chloroplastic of Lepidium virginicum (Virginia pepperweed).